A 240-amino-acid chain; its full sequence is Ribosomal RNA small subunit methyltransferase G (240 aa).

S-adenosyl-L-methionine is bound by residues glycine 79, phenylalanine 84, 130–131 (AE), and arginine 149.

It belongs to the methyltransferase superfamily. RNA methyltransferase RsmG family.

It localises to the cytoplasm. Specifically methylates the N7 position of a guanine in 16S rRNA. The sequence is that of Ribosomal RNA small subunit methyltransferase G from Lactobacillus acidophilus (strain ATCC 700396 / NCK56 / N2 / NCFM).